A 430-amino-acid chain; its full sequence is Pre-B-cell leukemia transcription factor 1 (430 aa).

Residues 1 to 40 (MDEQPRLMHSHAGVGMAGHPGLSQHLQDGAGGTEGEGGRK) are disordered. Residues 38-232 (GRKQDIGDIL…VMILRSRFLD (195 aa)) enclose the PBC domain. Residues 45 to 124 (DILQQIMTIT…EGVAGPEKGG (80 aa)) form a PBC-A region. Positions 127 to 232 (AAAAAAAAAS…VMILRSRFLD (106 aa)) are PBC-B. The segment at residues 233–295 (ARRKRRNFNK…NKRIRYKKNI (63 aa)) is a DNA-binding region (homeobox; TALE-type). 2 disordered regions span residues 317–338 (SAHG…SSSF) and 395–430 (SPQG…DTSN). Residues 323-338 (ANSPSTPNSAGSSSSF) are compositionally biased toward low complexity. Positions 407–418 (DATTPSSVTSPT) are enriched in polar residues.

The protein belongs to the TALE/PBX homeobox family. In terms of assembly, forms a heterodimer with MEIS1 which binds DNA. The PBX1-MEIS1 heterodimer binds a cAMP-responsive sequence in CYP17. It also binds a consensus region in the SOX3 promoter. PBX1 forms heterotrimers with MEIS1 and a number of HOX proteins including HOXA9, HOXD4, HOXD9 and HOXD10. Forms heterodimers with HOXA1, HOXA5, HOXB7 and HOXB8 which bind the 5'-TGATTGAT-3' consensus sequence. Also forms heterodimers with HOXA5, HOXB7, HOXB8, HOXC8 and HOXD4 which bind the 5'-ATCAATCAA-3' consensus sequence. Interacts with PBXIP1. Interacts with TLX1. Interacts with FOXC1. Interacts with MN1. As to quaternary structure, interacts with MEIS2 isoform 4, SP1, SP3 and KLF4. Part of a PDX1:PBX1b:MEIS2B complex; PBX1b recruits MEIS2B to the complex. As to expression, expressed in the kidney. Expressed in the endothelial cells of the glomeruli and interstitium (at protein level). Expressed in all tissues except in cells of the B and T lineage. Expressed strongly in kidney and brain.

Its subcellular location is the nucleus. In terms of biological role, transcription factor which binds the DNA sequence 5'-TGATTGAT-3' as part of a heterodimer with HOX proteins such as HOXA1, HOXA5, HOXB7 and HOXB8. Binds to the DNA sequence 5'-TGATTGAC-3' in complex with a nuclear factor which is not a class I HOX protein. Has also been shown to bind the DNA sequence 5'-ATCAATCAA-3' cooperatively with HOXA5, HOXB7, HOXB8, HOXC8 and HOXD4. Acts as a transcriptional activator of PF4 in complex with MEIS1. Also activates transcription of SOX3 in complex with MEIS1 by binding to the 5'-TGATTGAC-3' consensus sequence. In natural killer cells, binds to the NFIL3 promoter and acts as a transcriptional activator of NFIL3, promoting natural killer cell development. Plays a role in the cAMP-dependent regulation of CYP17A1 gene expression via its cAMP-regulatory sequence (CRS1). Probably in complex with MEIS2, involved in transcriptional regulation by KLF4. Acts as a transcriptional activator of NKX2-5 and a transcriptional repressor of CDKN2B. Together with NKX2-5, required for spleen development through a mechanism that involves CDKN2B repression. As part of a PDX1:PBX1b:MEIS2B complex in pancreatic acinar cells, is involved in the transcriptional activation of the ELA1 enhancer; the complex binds to the enhancer B element and cooperates with the transcription factor 1 complex (PTF1) bound to the enhancer A element. In Homo sapiens (Human), this protein is Pre-B-cell leukemia transcription factor 1 (PBX1).